We begin with the raw amino-acid sequence, 370 residues long: tRNA-specific 2-thiouridylase MnmA (370 aa).

ATP contacts are provided by residues 11–18 (GMSGGVDS) and Met37. An interaction with target base in tRNA region spans residues 97–99 (NPD). The active-site Nucleophile is Cys102. A disulfide bridge connects residues Cys102 and Cys199. Gly126 is an ATP binding site. Residues 149–151 (KDQ) are interaction with tRNA. The Cysteine persulfide intermediate role is filled by Cys199. Residues 307–308 (RY) form an interaction with tRNA region.

The protein belongs to the MnmA/TRMU family.

Its subcellular location is the cytoplasm. It carries out the reaction S-sulfanyl-L-cysteinyl-[protein] + uridine(34) in tRNA + AH2 + ATP = 2-thiouridine(34) in tRNA + L-cysteinyl-[protein] + A + AMP + diphosphate + H(+). In terms of biological role, catalyzes the 2-thiolation of uridine at the wobble position (U34) of tRNA, leading to the formation of s(2)U34. The protein is tRNA-specific 2-thiouridylase MnmA of Staphylococcus haemolyticus (strain JCSC1435).